A 418-amino-acid polypeptide reads, in one-letter code: Putative ion-transport protein YfeO (418 aa).

The next 12 membrane-spanning stretches (helical) occupy residues 10–30 (LLLS…LIVV), 54–74 (DSPF…GLVI), 99–119 (ALPG…SLGP), 120–140 (EHPI…RLLP), 149–169 (ILAS…AALI), 186–206 (LFAP…FFHP), 223–243 (ILSG…AVWC), 258–278 (VLML…AGPV), 300–320 (DYFL…ASGF), 322–342 (GGRI…LHEH), 343–363 (VPAV…VLVV), and 386–406 (LLCI…IMMV).

Belongs to the chloride channel (TC 2.A.49) family.

The protein resides in the cell membrane. This Escherichia fergusonii (strain ATCC 35469 / DSM 13698 / CCUG 18766 / IAM 14443 / JCM 21226 / LMG 7866 / NBRC 102419 / NCTC 12128 / CDC 0568-73) protein is Putative ion-transport protein YfeO.